An 878-amino-acid polypeptide reads, in one-letter code: Multiple RNA-binding domain-containing protein 1 (878 aa).

Positions 2 to 90 (SRVIVKGLPI…SKIEVSMAKS (89 aa)) constitute an RRM 1 domain. Disordered stretches follow at residues 118-143 (LLAD…KHDI), 159-269 (TMKP…AKDE), and 287-323 (GADT…EKSL). Polar residues predominate over residues 159 to 177 (TMKPSSQVTSWETVQSSKT). Positions 180-190 (EDEEAADDEVG) are enriched in acidic residues. Residues 295 to 304 (QQQQPDTEQQ) show a composition bias toward low complexity. Acidic residues predominate over residues 305 to 319 (QPEETEVETSQESEE). RRM domains lie at 330–408 (GRLF…PADA), 516–588 (RVIL…KGPS), 651–734 (VSIF…LSHR), and 752–829 (GKII…FVEQ). Residues 732–751 (SHRQGTSTTNASSKKKKKNQ) form a disordered region. Residues 852–878 (TKIANMRNSGKRKIDLDEDDENDGLQG) are disordered. The span at 867-878 (LDEDDENDGLQG) shows a compositional bias: acidic residues.

Belongs to the RRM MRD1 family.

The protein resides in the nucleus. Its function is as follows. Involved in pre-rRNA processing. The polypeptide is Multiple RNA-binding domain-containing protein 1 (MRD1) (Kluyveromyces lactis (strain ATCC 8585 / CBS 2359 / DSM 70799 / NBRC 1267 / NRRL Y-1140 / WM37) (Yeast)).